The following is a 248-amino-acid chain: ATP synthase subunit a (248 aa).

A run of 6 helical transmembrane segments spans residues 27 to 47, 83 to 103, 113 to 133, 142 to 162, 192 to 212, and 215 to 235; these read FTNS…LMLV, FFPL…IGIV, LIVT…YGFS, LFVP…IEVI, FVAM…LPLG, and IALT…FAIL.

Belongs to the ATPase A chain family. F-type ATPases have 2 components, CF(1) - the catalytic core - and CF(0) - the membrane proton channel. CF(1) has five subunits: alpha(3), beta(3), gamma(1), delta(1), epsilon(1). CF(0) has four main subunits: a, b, b' and c.

It is found in the cell inner membrane. In terms of biological role, key component of the proton channel; it plays a direct role in the translocation of protons across the membrane. In Rhodopseudomonas palustris (strain ATCC BAA-98 / CGA009), this protein is ATP synthase subunit a.